Here is a 343-residue protein sequence, read N- to C-terminus: tRNA N6-adenosine threonylcarbamoyltransferase (343 aa).

His112 and His116 together coordinate Fe cation. Substrate contacts are provided by residues 135–139, Asp168, Gly181, and Asn273; that span reads LVSGG. Asp301 serves as a coordination point for Fe cation.

It belongs to the KAE1 / TsaD family. Requires Fe(2+) as cofactor.

It localises to the cytoplasm. The catalysed reaction is L-threonylcarbamoyladenylate + adenosine(37) in tRNA = N(6)-L-threonylcarbamoyladenosine(37) in tRNA + AMP + H(+). In terms of biological role, required for the formation of a threonylcarbamoyl group on adenosine at position 37 (t(6)A37) in tRNAs that read codons beginning with adenine. Is involved in the transfer of the threonylcarbamoyl moiety of threonylcarbamoyl-AMP (TC-AMP) to the N6 group of A37, together with TsaE and TsaB. TsaD likely plays a direct catalytic role in this reaction. The chain is tRNA N6-adenosine threonylcarbamoyltransferase from Azoarcus sp. (strain BH72).